The chain runs to 165 residues: Large ribosomal subunit protein uL10 (165 aa).

Belongs to the universal ribosomal protein uL10 family. Part of the ribosomal stalk of the 50S ribosomal subunit. The N-terminus interacts with L11 and the large rRNA to form the base of the stalk. The C-terminus forms an elongated spine to which L12 dimers bind in a sequential fashion forming a multimeric L10(L12)X complex.

Forms part of the ribosomal stalk, playing a central role in the interaction of the ribosome with GTP-bound translation factors. In Paraburkholderia phymatum (strain DSM 17167 / CIP 108236 / LMG 21445 / STM815) (Burkholderia phymatum), this protein is Large ribosomal subunit protein uL10.